We begin with the raw amino-acid sequence, 266 residues long: Putative carbamate hydrolase RutD (266 aa).

The AB hydrolase-1 domain occupies 14–116; it reads PVVVLISGLG…VLVSVNGWLR (103 aa).

Belongs to the AB hydrolase superfamily. Hydrolase RutD family.

The enzyme catalyses carbamate + 2 H(+) = NH4(+) + CO2. Involved in pyrimidine catabolism. May facilitate the hydrolysis of carbamate, a reaction that can also occur spontaneously. This chain is Putative carbamate hydrolase RutD, found in Escherichia coli O81 (strain ED1a).